Reading from the N-terminus, the 335-residue chain is Biotin synthase (335 aa).

Residues threonine 39–arginine 267 form the Radical SAM core domain. The [4Fe-4S] cluster site is built by cysteine 54, cysteine 58, and cysteine 61. Residues cysteine 98, cysteine 130, cysteine 190, and arginine 262 each coordinate [2Fe-2S] cluster.

Belongs to the radical SAM superfamily. Biotin synthase family. In terms of assembly, homodimer. The cofactor is [4Fe-4S] cluster. [2Fe-2S] cluster is required as a cofactor.

The enzyme catalyses (4R,5S)-dethiobiotin + (sulfur carrier)-SH + 2 reduced [2Fe-2S]-[ferredoxin] + 2 S-adenosyl-L-methionine = (sulfur carrier)-H + biotin + 2 5'-deoxyadenosine + 2 L-methionine + 2 oxidized [2Fe-2S]-[ferredoxin]. The protein operates within cofactor biosynthesis; biotin biosynthesis; biotin from 7,8-diaminononanoate: step 2/2. In terms of biological role, catalyzes the conversion of dethiobiotin (DTB) to biotin by the insertion of a sulfur atom into dethiobiotin via a radical-based mechanism. This is Biotin synthase from Nostoc punctiforme (strain ATCC 29133 / PCC 73102).